The sequence spans 763 residues: Phosphoglycerol transferase I (763 aa).

4 consecutive transmembrane segments (helical) span residues 1–21 (MSELLSFALFLASVLIYAWKA), 26–46 (WWFAATLTVLGLFVVLNITLF), 77–97 (ILPGIGIVLGLTAVFGALGWI), and 108–128 (FGYSLLALLLALGSVDASPAF).

This sequence belongs to the OpgB family.

It localises to the cell inner membrane. The enzyme catalyses a phosphatidylglycerol + a membrane-derived-oligosaccharide D-glucose = a 1,2-diacyl-sn-glycerol + a membrane-derived-oligosaccharide 6-(glycerophospho)-D-glucose.. The protein operates within glycan metabolism; osmoregulated periplasmic glucan (OPG) biosynthesis. Functionally, transfers a phosphoglycerol residue from phosphatidylglycerol to the membrane-bound nascent glucan backbones. This chain is Phosphoglycerol transferase I, found in Escherichia coli (strain 55989 / EAEC).